The following is a 109-amino-acid chain: Phosphocarrier protein HPr (109 aa).

The HPr domain occupies Glu-22–Leu-109. His-36 functions as the Pros-phosphohistidine intermediate in the catalytic mechanism.

It belongs to the HPr family.

The protein localises to the cytoplasm. Functionally, general (non sugar-specific) component of the phosphoenolpyruvate-dependent sugar phosphotransferase system (sugar PTS). This major carbohydrate active-transport system catalyzes the phosphorylation of incoming sugar substrates concomitantly with their translocation across the cell membrane. The phosphoryl group from phosphoenolpyruvate (PEP) is transferred to the phosphoryl carrier protein HPr by enzyme I. Phospho-HPr then transfers it to the PTS EIIA domain. The polypeptide is Phosphocarrier protein HPr (ptsH) (Chlamydia trachomatis serovar D (strain ATCC VR-885 / DSM 19411 / UW-3/Cx)).